Consider the following 242-residue polypeptide: Biosynthetic peptidoglycan transglycosylase (242 aa).

The helical transmembrane segment at 19–39 (LMVVLAVFWAGGIALFSVAPV) threads the bilayer.

This sequence belongs to the glycosyltransferase 51 family.

The protein resides in the cell inner membrane. The catalysed reaction is [GlcNAc-(1-&gt;4)-Mur2Ac(oyl-L-Ala-gamma-D-Glu-L-Lys-D-Ala-D-Ala)](n)-di-trans,octa-cis-undecaprenyl diphosphate + beta-D-GlcNAc-(1-&gt;4)-Mur2Ac(oyl-L-Ala-gamma-D-Glu-L-Lys-D-Ala-D-Ala)-di-trans,octa-cis-undecaprenyl diphosphate = [GlcNAc-(1-&gt;4)-Mur2Ac(oyl-L-Ala-gamma-D-Glu-L-Lys-D-Ala-D-Ala)](n+1)-di-trans,octa-cis-undecaprenyl diphosphate + di-trans,octa-cis-undecaprenyl diphosphate + H(+). It functions in the pathway cell wall biogenesis; peptidoglycan biosynthesis. Peptidoglycan polymerase that catalyzes glycan chain elongation from lipid-linked precursors. The chain is Biosynthetic peptidoglycan transglycosylase from Shigella boydii serotype 4 (strain Sb227).